Here is a 156-residue protein sequence, read N- to C-terminus: Small ribosomal subunit protein uS7 (156 aa).

This sequence belongs to the universal ribosomal protein uS7 family. As to quaternary structure, part of the 30S ribosomal subunit. Contacts proteins S9 and S11.

Its function is as follows. One of the primary rRNA binding proteins, it binds directly to 16S rRNA where it nucleates assembly of the head domain of the 30S subunit. Is located at the subunit interface close to the decoding center, probably blocks exit of the E-site tRNA. The protein is Small ribosomal subunit protein uS7 of Burkholderia ambifaria (strain MC40-6).